Reading from the N-terminus, the 267-residue chain is 4-diphosphocytidyl-2-C-methyl-D-erythritol kinase (267 aa).

Residue Lys-8 is part of the active site. 90 to 100 contacts ATP; sequence PIGAGLGGGSS. Residue Asp-132 is part of the active site.

This sequence belongs to the GHMP kinase family. IspE subfamily.

It catalyses the reaction 4-CDP-2-C-methyl-D-erythritol + ATP = 4-CDP-2-C-methyl-D-erythritol 2-phosphate + ADP + H(+). The protein operates within isoprenoid biosynthesis; isopentenyl diphosphate biosynthesis via DXP pathway; isopentenyl diphosphate from 1-deoxy-D-xylulose 5-phosphate: step 3/6. In terms of biological role, catalyzes the phosphorylation of the position 2 hydroxy group of 4-diphosphocytidyl-2C-methyl-D-erythritol. The chain is 4-diphosphocytidyl-2-C-methyl-D-erythritol kinase from Azobacteroides pseudotrichonymphae genomovar. CFP2.